The primary structure comprises 355 residues: dTDP-D-glucose 4,6-dehydratase (355 aa).

Thr-142 is a binding site for substrate. Catalysis depends on Asp-143, which acts as the Proton donor. Residues Glu-144 and Tyr-166 each act as proton acceptor in the active site.

It belongs to the NAD(P)-dependent epimerase/dehydratase family. dTDP-glucose dehydratase subfamily. NAD(+) serves as cofactor.

The catalysed reaction is dTDP-alpha-D-glucose = dTDP-4-dehydro-6-deoxy-alpha-D-glucose + H2O. This Bos taurus (Bovine) protein is dTDP-D-glucose 4,6-dehydratase (TGDS).